We begin with the raw amino-acid sequence, 193 residues long: Large ribosomal subunit protein bL17m (193 aa).

Belongs to the bacterial ribosomal protein bL17 family. Component of the mitochondrial large ribosomal subunit (mt-LSU). Mature N.crassa 74S mitochondrial ribosomes consist of a small (37S) and a large (54S) subunit. The 37S small subunit contains a 16S ribosomal RNA (16S mt-rRNA) and 32 different proteins. The 54S large subunit contains a 23S rRNA (23S mt-rRNA) and 42 different proteins.

Its subcellular location is the mitochondrion. Functionally, component of the mitochondrial ribosome (mitoribosome), a dedicated translation machinery responsible for the synthesis of mitochondrial genome-encoded proteins, including at least some of the essential transmembrane subunits of the mitochondrial respiratory chain. The mitoribosomes are attached to the mitochondrial inner membrane and translation products are cotranslationally integrated into the membrane. The polypeptide is Large ribosomal subunit protein bL17m (mrpl8) (Neurospora crassa (strain ATCC 24698 / 74-OR23-1A / CBS 708.71 / DSM 1257 / FGSC 987)).